Reading from the N-terminus, the 160-residue chain is Endoribonuclease YbeY (160 aa).

The Zn(2+) site is built by H125, H129, and H135.

This sequence belongs to the endoribonuclease YbeY family. It depends on Zn(2+) as a cofactor.

It is found in the cytoplasm. Single strand-specific metallo-endoribonuclease involved in late-stage 70S ribosome quality control and in maturation of the 3' terminus of the 16S rRNA. The polypeptide is Endoribonuclease YbeY (Dehalococcoides mccartyi (strain ATCC BAA-2100 / JCM 16839 / KCTC 5957 / BAV1)).